A 219-amino-acid polypeptide reads, in one-letter code: MRFQLFIYFYFTIVVIAGTNTIQQFSDAGDRLITSLRNLDNNGTYETLTAEKVPIIEGQIQNISAKYEQHTFILKGLEAVLNYKVKSLDNNERESLEIEYEKVEKALDAALNVSPFEYIKKFKEVSRGKVVNALENLSREQNRITINGGREDEKEKEAREKKKRLDRIKRILTVSLLELGLAQGVADLCAVAPFACLLGVTVGSIGFIFWLALIYNAIQ.

A signal peptide spans 1-19; the sequence is MRFQLFIYFYFTIVVIAGT. The Extracellular segment spans residues 20-170; that stretch reads NTIQQFSDAG…KKKRLDRIKR (151 aa). N-linked (GlcNAc...) asparagine glycans are attached at residues N42, N62, and N136. A helical transmembrane segment spans residues 171–191; sequence ILTVSLLELGLAQGVADLCAV. Residues 192–193 are Cytoplasmic-facing; sequence AP. Residues 194–214 traverse the membrane as a helical segment; it reads FACLLGVTVGSIGFIFWLALI. Topologically, residues 215–219 are extracellular; the sequence is YNAIQ.

The protein belongs to the OSW4/6 family. In terms of processing, N-glycosylated.

The protein resides in the membrane. Functionally, involved in spore wall assembly. May be involved in maintaining genome integrity. In Saccharomyces cerevisiae (strain ATCC 204508 / S288c) (Baker's yeast), this protein is Outer spore wall protein 4.